The chain runs to 423 residues: NADH-quinone oxidoreductase subunit F (423 aa).

Residue 54-63 coordinates NAD(+); the sequence is GRGGAGFSTG. 166–213 lines the FMN pocket; sequence GAGAYICGEETALLESLEGKKGMPRLKPPFPAGFGLYGCPTTINNVES. Residues Cys344, Cys347, Cys350, and Cys390 each contribute to the [4Fe-4S] cluster site.

Belongs to the complex I 51 kDa subunit family. The cofactor is FMN. [4Fe-4S] cluster is required as a cofactor.

It catalyses the reaction a quinone + NADH + 5 H(+)(in) = a quinol + NAD(+) + 4 H(+)(out). In terms of biological role, NDH-1 shuttles electrons from NADH, via FMN and iron-sulfur (Fe-S) centers, to quinones in the respiratory chain. Couples the redox reaction to proton translocation (for every two electrons transferred, four hydrogen ions are translocated across the cytoplasmic membrane), and thus conserves the redox energy in a proton gradient. This Rickettsia akari (strain Hartford) protein is NADH-quinone oxidoreductase subunit F (nuoF).